The chain runs to 566 residues: Peroxisomal leader peptide-processing protease (566 aa).

The interval 319 to 531 (ALAALLPPEV…LQPALQQYSQ (213 aa)) is serine protease. Active-site charge relay system residues include histidine 372, aspartate 408, and serine 481.

The protein belongs to the peptidase S1B family. As to quaternary structure, homodimer. Forms a heterodimer with the C-terminal cleavage product (45 kDa form). Forms a heterodimer with the N-terminal cleavage product (15 kDa form). Interacts with PEX5. Interacts with LONP2. In terms of processing, self-cleavage gives rise to an N-terminal 15-kDa fragment and C-terminal 45-kDa fragment upon import into the peroxisomes. The full-lengh TYSND1 is the active the proteolytic processing of PTS1- and PTS2-proteins and in self-cleavage, and intermolecular self-cleavage of TYSND1 down-regulates its protease activity.

The protein resides in the peroxisome. In terms of biological role, peroxisomal protease that mediates both the removal of the leader peptide from proteins containing a PTS2 target sequence and processes several PTS1-containing proteins. Catalyzes the processing of PTS1-proteins involved in the peroxisomal beta-oxidation of fatty acids. This chain is Peroxisomal leader peptide-processing protease (TYSND1), found in Homo sapiens (Human).